The sequence spans 376 residues: Mitogen-activated protein kinase 5 (376 aa).

Residues 43-329 enclose the Protein kinase domain; the sequence is VPPIRPIGRG…VEEALCYPYL (287 aa). Residues 49–57 and Lys-72 each bind ATP; that span reads IGRGAYGFV. Asp-169 serves as the catalytic Proton acceptor. Thr-201 carries the post-translational modification Phosphothreonine. A TXY motif is present at residues 201 to 203; that stretch reads TEY. Tyr-203 carries the post-translational modification Phosphotyrosine. Thr-206 is modified (phosphothreonine).

Belongs to the protein kinase superfamily. CMGC Ser/Thr protein kinase family. MAP kinase subfamily. In terms of processing, autophosphorylated on threonine and tyrosine residues. Dually phosphorylated on Thr-201 and Tyr-203, which activates the enzyme.

It carries out the reaction L-seryl-[protein] + ATP = O-phospho-L-seryl-[protein] + ADP + H(+). It catalyses the reaction L-threonyl-[protein] + ATP = O-phospho-L-threonyl-[protein] + ADP + H(+). Activated by threonine and tyrosine phosphorylation. Activated by the MAP kinase kinase MKK2. Activated by the MAP kinase kinase MKK6 in vitro. The protein is Mitogen-activated protein kinase 5 (MPK5) of Arabidopsis thaliana (Mouse-ear cress).